Here is a 535-residue protein sequence, read N- to C-terminus: Bifunctional purine biosynthesis protein PurH (535 aa).

The 146-residue stretch at 6–151 (TRLPIRRALI…KNHKDVAIVV (146 aa)) folds into the MGS-like domain.

The protein belongs to the PurH family.

The catalysed reaction is (6R)-10-formyltetrahydrofolate + 5-amino-1-(5-phospho-beta-D-ribosyl)imidazole-4-carboxamide = 5-formamido-1-(5-phospho-D-ribosyl)imidazole-4-carboxamide + (6S)-5,6,7,8-tetrahydrofolate. It catalyses the reaction IMP + H2O = 5-formamido-1-(5-phospho-D-ribosyl)imidazole-4-carboxamide. Its pathway is purine metabolism; IMP biosynthesis via de novo pathway; 5-formamido-1-(5-phospho-D-ribosyl)imidazole-4-carboxamide from 5-amino-1-(5-phospho-D-ribosyl)imidazole-4-carboxamide (10-formyl THF route): step 1/1. The protein operates within purine metabolism; IMP biosynthesis via de novo pathway; IMP from 5-formamido-1-(5-phospho-D-ribosyl)imidazole-4-carboxamide: step 1/1. This chain is Bifunctional purine biosynthesis protein PurH, found in Pseudomonas entomophila (strain L48).